The following is a 176-amino-acid chain: Protein CURLY FLAG LEAF 2 (176 aa).

The short motif at 41 to 46 is the EAR element; it reads FLELSS. The WW domain occupies 48–82; it reads FSVPSHLEQCLDLKTGEIYYRSWNSGMRVKEDPRK. 2 disordered regions span residues 77-106 and 111-130; these read KEDPRKSMSRGNYADQSSGESSGTVFSSEE and YESEESSSESSPSSRKYHKE. Residues 93 to 106 show a composition bias toward low complexity; the sequence is SSGESSGTVFSSEE.

As to quaternary structure, may interact with BHLH122/CFLAP1 and BHLH80/CFLAP2.

Its function is as follows. May negatively regulate the cuticle development by interacting with the HD-ZIP IV transcription factor HDG1. In Arabidopsis thaliana (Mouse-ear cress), this protein is Protein CURLY FLAG LEAF 2.